Consider the following 742-residue polypeptide: Catalase-peroxidase (742 aa).

The tract at residues 1 to 43 is disordered; the sequence is MSDSCPVAHEGNTQSTSESENPVIPSPTPAANRPRNNRDWWPN. Polar residues predominate over residues 11-20; it reads GNTQSTSESE. Positions 109–231 form a cross-link, tryptophyl-tyrosyl-methioninium (Trp-Tyr) (with M-257); the sequence is WHAAGTYRIA…LGAVQMGLIY (123 aa). The active-site Proton acceptor is histidine 110. Positions 231-257 form a cross-link, tryptophyl-tyrosyl-methioninium (Tyr-Met) (with W-109); the sequence is YVNPEGPNGQPDPLAAARDIRETFSRM. Residue histidine 272 participates in heme b binding.

It belongs to the peroxidase family. Peroxidase/catalase subfamily. In terms of assembly, homodimer or homotetramer. The cofactor is heme b. Formation of the three residue Trp-Tyr-Met cross-link is important for the catalase, but not the peroxidase activity of the enzyme.

It carries out the reaction H2O2 + AH2 = A + 2 H2O. The catalysed reaction is 2 H2O2 = O2 + 2 H2O. Functionally, bifunctional enzyme with both catalase and broad-spectrum peroxidase activity. The polypeptide is Catalase-peroxidase (Rhodococcus jostii (strain RHA1)).